Reading from the N-terminus, the 1357-residue chain is Ubiquitin carboxyl-terminal hydrolase 19 (1357 aa).

Disordered stretches follow at residues 1-52 (MSAG…PTKD), 162-239 (LSPI…SDSA), and 275-296 (VSPRSDSVSPVMIRNRDPEKDD). At 1–1330 (MSAGTSATGP…TTSDEGCLRY (1330 aa)) the chain is on the cytoplasmic side. 2 stretches are compositionally biased toward basic and acidic residues: residues 28-52 (DRANQESKDGDPRRVSMPRKEPTKD) and 171-182 (SEPRRAKQEARN). The CS 1 domain maps to 51-140 (KDELLLDWRQ…VPLLTWPSLL (90 aa)). The span at 194–206 (SGASPGAQAGPSA) shows a compositional bias: low complexity. 2 positions are modified to phosphoserine: Ser-221 and Ser-283. In terms of domain architecture, CS 2 spans 321–423 (LAFVKNDSYE…RQSQRWGGLE (103 aa)). Residues 432–479 (AKVAVPTGPTPLDSTPPGGGPLPLTGQEEARAVEKEKPKARSEDSGLD) are disordered. Residues 437–457 (PTGPTPLDSTPPGGGPLPLTG) are compositionally biased toward low complexity. Basic and acidic residues predominate over residues 459–475 (EEARAVEKEKPKARSED). The USP domain occupies 536–1253 (TGLVNLGNTC…YAYVLFYRRR (718 aa)). The active-site Nucleophile is Cys-545. The Zn(2+) site is built by Cys-830, Cys-833, Cys-847, Cys-850, Cys-856, Cys-860, His-868, and Cys-872. Residues 830–872 (CAACQRKQQSEDEKLKRCTRCYRVGYCNQFCQKTHWPDHKGLC) form an MYND-type zinc finger. The interval 962-981 (DTGAHRMWPPADRGPVPSTS) is disordered. His-1204 functions as the Proton acceptor in the catalytic mechanism. A compositionally biased stretch (basic and acidic residues) spans 1259–1271 (RPPRAAHAEHHPD). Disordered stretches follow at residues 1259 to 1278 (RPPRAAHAEHHPDLGPAAEA) and 1292 to 1320 (AEEEMVPEGPGPLGPWGPQDWVGPPPRGP). Residues 1331–1351 (FVLGTVAALVALVLNVFYPLV) form a helical membrane-spanning segment. Residues 1352–1357 (SQSRWR) are Lumenal-facing.

In terms of assembly, interacts with RNF123. Interacts with BIRC2/c-IAP1, BIRC3/c-IAP2 and XIAP/BIRC4. Interacts with HIF1A (via N-terminus). Expressed in testis, heart, kidney and skeletal muscle. Low levels of expression are detectable in all other tissues screened.

It localises to the endoplasmic reticulum membrane. It carries out the reaction Thiol-dependent hydrolysis of ester, thioester, amide, peptide and isopeptide bonds formed by the C-terminal Gly of ubiquitin (a 76-residue protein attached to proteins as an intracellular targeting signal).. In terms of biological role, deubiquitinating enzyme that regulates the degradation of various proteins by removing ubiquitin moieties, thereby preventing their proteasomal degradation. Stabilizes RNF123, which promotes CDKN1B degradation and contributes to cell proliferation. Decreases the levels of ubiquitinated proteins during skeletal muscle formation and acts to repress myogenesis. Modulates transcription of major myofibrillar proteins. Also involved in turnover of endoplasmic-reticulum-associated degradation (ERAD) substrates. Mechanistically, deubiquitinates and thereby stabilizes several E3 ligases involved in the ERAD pathway including SYVN1 or MARCHF6. Regulates the stability of other E3 ligases including BIRC2/c-IAP1 and BIRC3/c-IAP2 by preventing their ubiquitination. Required for cells to mount an appropriate response to hypoxia by rescuing HIF1A from degradation in a non-catalytic manner and by mediating the deubiquitination of FUNDC1. Attenuates mitochondrial damage and ferroptosis by targeting and stabilizing NADPH oxidase 4/NOX4. Negatively regulates TNF-alpha- and IL-1beta-triggered NF-kappa-B activation by hydrolyzing 'Lys-27'- and 'Lys-63'-linked polyubiquitin chains from MAP3K7. Modulates also the protein level and aggregation of polyQ-expanded huntingtin/HTT through HSP90AA1. The polypeptide is Ubiquitin carboxyl-terminal hydrolase 19 (Usp19) (Rattus norvegicus (Rat)).